The primary structure comprises 40 residues: Omega-conotoxin RsXXVIA (40 aa).

Contains 4 disulfide bonds. In terms of tissue distribution, expressed by the venom duct.

It is found in the secreted. Functionally, omega-conotoxins act at presynaptic membranes, they bind and block voltage-gated calcium channels (Cav). This toxin inhibits rat Cav2.2/CACNA1B calcium channels in a dose-dependent manner (EC(50)=2.8 uM), whose effect is partially reversed after washing. In vivo, when injected into mice, it shows both an analgesic effect in acute thermal pain at 30 and 45 minutes post-injection and an anti-nociceptive effect in a formalin chronic pain test. The polypeptide is Omega-conotoxin RsXXVIA (Conus regularis (Regular cone)).